The primary structure comprises 108 residues: UPF0145 protein alr2488 (108 aa).

It belongs to the UPF0145 family.

This Nostoc sp. (strain PCC 7120 / SAG 25.82 / UTEX 2576) protein is UPF0145 protein alr2488.